Reading from the N-terminus, the 110-residue chain is Large ribosomal subunit protein uL22 (110 aa).

It belongs to the universal ribosomal protein uL22 family. In terms of assembly, part of the 50S ribosomal subunit.

This protein binds specifically to 23S rRNA; its binding is stimulated by other ribosomal proteins, e.g. L4, L17, and L20. It is important during the early stages of 50S assembly. It makes multiple contacts with different domains of the 23S rRNA in the assembled 50S subunit and ribosome. Its function is as follows. The globular domain of the protein is located near the polypeptide exit tunnel on the outside of the subunit, while an extended beta-hairpin is found that lines the wall of the exit tunnel in the center of the 70S ribosome. The chain is Large ribosomal subunit protein uL22 from Pseudoalteromonas translucida (strain TAC 125).